The sequence spans 254 residues: 14-3-3 protein 2 (254 aa).

It belongs to the 14-3-3 family. As to quaternary structure, homodimer.

In Solanum lycopersicum (Tomato), this protein is 14-3-3 protein 2 (TFT2).